Consider the following 306-residue polypeptide: 4-hydroxybenzoate geranyltransferase 2 (306 aa).

8 helical membrane-spanning segments follow: residues 38 to 58 (IGSWLLAWPAFWSVALIADLG), 61 to 81 (PKMLAIFGWWAVWIRGAGCTI), 119 to 139 (LFIGLGVLYQFNILTLALAIV), 153 to 173 (ITYWPQAFLGVMISWGALLGS), 178 to 198 (GSVVPSIAYPLYISSFFWTLV), 229 to 249 (IWITWFGIGCIGALLLGGFIV), 251 to 271 (IGLPYYVFLAIATGQLIWQIF), and 285 to 305 (FVSNQWFGAIIFTGILVGRLF).

Belongs to the UbiA prenyltransferase family. Mg(2+) serves as cofactor. Expressed only in roots.

The protein resides in the endoplasmic reticulum membrane. The catalysed reaction is 4-hydroxybenzoate + (2E)-geranyl diphosphate = 3-geranyl-4-hydroxybenzoate + diphosphate. In terms of biological role, prenyltransferase involved in the biosynthesis of shikonin, a naphthoquinone secondary metabolite. Could accept only geranyl diphosphate and not dimethylallyl diphosphate, farnesyl diphosphate, or geranylgeranyl diphosphate as substrate. The polypeptide is 4-hydroxybenzoate geranyltransferase 2 (PGT-2) (Lithospermum erythrorhizon (Purple gromwell)).